We begin with the raw amino-acid sequence, 533 residues long: 2-succinyl-5-enolpyruvyl-6-hydroxy-3-cyclohexene-1-carboxylate synthase (533 aa).

Belongs to the TPP enzyme family. MenD subfamily. In terms of assembly, homodimer. Mg(2+) serves as cofactor. The cofactor is Mn(2+). Requires thiamine diphosphate as cofactor.

It carries out the reaction isochorismate + 2-oxoglutarate + H(+) = 5-enolpyruvoyl-6-hydroxy-2-succinyl-cyclohex-3-ene-1-carboxylate + CO2. It functions in the pathway quinol/quinone metabolism; 1,4-dihydroxy-2-naphthoate biosynthesis; 1,4-dihydroxy-2-naphthoate from chorismate: step 2/7. The protein operates within quinol/quinone metabolism; menaquinone biosynthesis. Catalyzes the thiamine diphosphate-dependent decarboxylation of 2-oxoglutarate and the subsequent addition of the resulting succinic semialdehyde-thiamine pyrophosphate anion to isochorismate to yield 2-succinyl-5-enolpyruvyl-6-hydroxy-3-cyclohexene-1-carboxylate (SEPHCHC). The polypeptide is 2-succinyl-5-enolpyruvyl-6-hydroxy-3-cyclohexene-1-carboxylate synthase (Akkermansia muciniphila (strain ATCC BAA-835 / DSM 22959 / JCM 33894 / BCRC 81048 / CCUG 64013 / CIP 107961 / Muc)).